The sequence spans 454 residues: uncharacterized protein (454 aa).

[4Fe-4S] cluster is bound by residues Cys73, Cys79, Cys82, and Cys154. Residues Gln279, Phe307, Asp328, and Asp381 each contribute to the S-adenosyl-L-methionine site. Cys408 serves as the catalytic Nucleophile.

It belongs to the class I-like SAM-binding methyltransferase superfamily. RNA M5U methyltransferase family.

This is an uncharacterized protein from Leptospira interrogans serogroup Icterohaemorrhagiae serovar Lai (strain 56601).